Here is a 213-residue protein sequence, read N- to C-terminus: Neuroligin-4, X-linked (213 aa).

Residues 1-56 (FQYVSTTTKVPPPDMTSFPYGTRRSPAKIWPTTKRPAITPANNPKHSKDPHKTGPE) form a disordered region. Residues 1–73 (FQYVSTTTKV…TKRDYSTELS (73 aa)) lie on the Extracellular side of the membrane. Positions 46–55 (HSKDPHKTGP) are enriched in basic and acidic residues. A helical transmembrane segment spans residues 74 to 94 (VTIAVGASLLFLNILAFAALY). Residues 95–213 (YKKDKRRHET…LPHGHSTTRV (119 aa)) are Cytoplasmic-facing. Position 109 is a phosphoserine (S109).

The protein belongs to the type-B carboxylesterase/lipase family. As to quaternary structure, homodimer. Interacts with NRXN1 in a calcium-dependent manner. Interaction with neurexins is mediated by heparan sulfate glycan modification on neurexin. Interacts through its C-terminus with DLG4/PSD-95 third PDZ domain.

Its subcellular location is the cell membrane. It is found in the postsynaptic density membrane. In terms of biological role, cell surface protein involved in cell-cell-interactions via its interactions with neurexin family members. In Macaca mulatta (Rhesus macaque), this protein is Neuroligin-4, X-linked (NLGN4X).